Here is a 452-residue protein sequence, read N- to C-terminus: 1,3-beta-glucanosyltransferase gel1 (452 aa).

A signal peptide spans 1–19 (MKASAVTAALAVGASTVLA). An intrachain disulfide couples Cys-71 to Cys-100. Residues Tyr-89, Asn-159, Glu-160, Asp-201, and Arg-206 each contribute to the (1,3-beta-D-glucosyl)n site. Glu-160 (proton donor) is an active-site residue. Disulfide bonds link Cys-215-Cys-345 and Cys-233-Cys-264. Asn-249 carries an N-linked (GlcNAc...) asparagine glycan. Glu-261 serves as the catalytic Nucleophile. A (1,3-beta-D-glucosyl)n-binding site is contributed by Tyr-292. A compositionally biased stretch (polar residues) spans 325–340 (EKTSNPSGDGNYNKTG). The disordered stretch occupies residues 325–419 (EKTSNPSGDG…SGTSTSSKGA (95 aa)). Asn-337 carries an N-linked (GlcNAc...) asparagine glycan. Positions 393–419 (STATAEPGSGSATGSSSSGTSTSSKGA) are enriched in low complexity. The GPI-like-anchor amidated alanine moiety is linked to residue Ala-419. A propeptide spans 420-452 (AAGLTVPSLTMAPVVVGAVTLLSTVFGAGLVLL) (removed in mature form).

Belongs to the glycosyl hydrolase 72 family. Post-translationally, the GPI-like anchor contains a phosphoceramide lipid group.

Its subcellular location is the cell membrane. Its function is as follows. Splits internally a 1,3-beta-glucan molecule and transfers the newly generated reducing end (the donor) to the non-reducing end of another 1,3-beta-glucan molecule (the acceptor) forming a 1,3-beta linkage, resulting in the elongation of 1,3-beta-glucan chains in the cell wall. Involved in cell wall morphogenesis. This is 1,3-beta-glucanosyltransferase gel1 (gel1) from Aspergillus fumigatus (strain ATCC MYA-4609 / CBS 101355 / FGSC A1100 / Af293) (Neosartorya fumigata).